The chain runs to 227 residues: Brain acid soluble protein 1 (227 aa).

A compositionally biased stretch (basic residues) spans 1–11; sequence MGGKLSKKKKG. The disordered stretch occupies residues 1 to 227; sequence MGGKLSKKKK…NSDQTVTVKE (227 aa). The N-myristoyl glycine moiety is linked to residue Gly2. The segment covering 15–27 has biased composition (basic and acidic residues); the sequence is NDEKAKEKDKKAE. Residue Lys25 forms a Glycyl lysine isopeptide (Lys-Gly) (interchain with G-Cter in SUMO2) linkage. Phosphothreonine occurs at positions 31 and 36. The residue at position 40 (Ser40) is a Phosphoserine. A compositionally biased stretch (basic and acidic residues) spans 49–105; sequence AEAKEGKEKPDQDAEGKAEEKEGEKDAAAAKEEAPKAEPEKTEGAAEAKAEPPKAPE. Glycyl lysine isopeptide (Lys-Gly) (interchain with G-Cter in SUMO2) cross-links involve residues Lys84 and Lys97. Positions 106–139 are enriched in low complexity; the sequence is QEQAAPGPAAGGEAPKAAEAAAAPAESAAPAAGE. The segment covering 140–152 has biased composition (basic and acidic residues); sequence EPSKEEGEPKKTE. Lys163 participates in a covalent cross-link: Glycyl lysine isopeptide (Lys-Gly) (interchain with G-Cter in SUMO2). Residues Ser164, Ser170, Ser172, Ser176, and Ser195 each carry the phosphoserine modification. The span at 173–185 shows a compositional bias: polar residues; it reads KPGSSEAAPSSKE. Thr196 carries the phosphothreonine modification. Phosphoserine occurs at positions 205 and 219. Over residues 218 to 227 the composition is skewed to polar residues; the sequence is NSDQTVTVKE.

As to expression, brain.

The protein resides in the cell membrane. It is found in the cell projection. It localises to the growth cone. The chain is Brain acid soluble protein 1 (BASP1) from Homo sapiens (Human).